The chain runs to 499 residues: MTLRLTNTLTRRTEPFTPLRPGKASIYCCGVTVYDLCHLGHARSYINWDVLRRYLIWSGLDVRFVQNFTDIDDKILKRASDENSSMTAVSERNIDAFHADMDSLGILRPDSMPRATQCLDGIRALIGELEAKGAAYSAEGDVYFAVMKHAGYGKLSGRDLSEQQENAGGRVADAEGARKQHPFDFALWKAAKEGEPSFPSPWGAGRPGWHIECSAMVRAELGDTIDIHLGGADLVFPHHENEIAQSEAATGQELAQVWMHNGMVNVGGQKMSKSLGNFTTIRALLESGVSPMTLRLFVLQAHYRKPLDFTAEALEAAATGWKGLNAALGLGERHGQSLEWPATPALAPVALVAPSNHPSEPLEPLQQRFIDAMDDDLNSSGALAVLFDLAKPLRALANRLERGDRADRPADELAALALRWRLLRDLAAVLGLRREADSESSGPGDDSTNQDEIQAAIDARIAAKSAKNYAEADRIRDELKAQGIELIDKPGGITEWIRR.

Cys29 contributes to the Zn(2+) binding site. Residues 31–41 (VTVYDLCHLGH) carry the 'HIGH' region motif. Cys213, His238, and Glu242 together coordinate Zn(2+). Positions 270–274 (KMSKS) match the 'KMSKS' region motif. Lys273 is a binding site for ATP.

Belongs to the class-I aminoacyl-tRNA synthetase family. As to quaternary structure, monomer. The cofactor is Zn(2+).

It localises to the cytoplasm. It catalyses the reaction tRNA(Cys) + L-cysteine + ATP = L-cysteinyl-tRNA(Cys) + AMP + diphosphate. The sequence is that of Cysteine--tRNA ligase from Synechococcus sp. (strain CC9902).